A 349-amino-acid polypeptide reads, in one-letter code: MPAEVAAGLPPLPPNHFYFYPPDPLLEGDGAITAIEDSDPFDQYVYRLRRVLYQGRTRWQNVLIADTYNYDRVLMLDGAIQSAESDESLYHELLVQPAMLAHDEPRDVLIIGGGEGATLREVLSHASVRRAVMVDLDRELVELCREHLFQWHQGAFDDPRCELLAEDGRAYLERDPSLYDVVIIDVVDMLDNGPAQALYTRQFYELLHSRLRPGGVVAVQGLEFSHSDDKPHAALARTLRSVFSQVHSYRATVPSFLSSWGFLLASDWLDTNHWQAEDIDRRIERKLGPLWLDHLDGDYLKACFVMDRETRFLLAQPGPVLEDGVPFVAPPDIEEIEFGPAQLPALART.

Residues 29–267 (DGAITAIEDS…SSWGFLLASD (239 aa)) form the PABS domain. Gln60 contacts S-methyl-5'-thioadenosine. His91 and Glu115 together coordinate spermidine. S-methyl-5'-thioadenosine is bound by residues Asp135 and 167-168 (DG). Asp185 acts as the Proton acceptor in catalysis. Pro194 is an S-methyl-5'-thioadenosine binding site.

The protein belongs to the spermidine/spermine synthase family. In terms of assembly, homodimer or homotetramer.

The protein resides in the cytoplasm. The enzyme catalyses S-adenosyl 3-(methylsulfanyl)propylamine + putrescine = S-methyl-5'-thioadenosine + spermidine + H(+). It participates in amine and polyamine biosynthesis; spermidine biosynthesis; spermidine from putrescine: step 1/1. Catalyzes the irreversible transfer of a propylamine group from the amino donor S-adenosylmethioninamine (decarboxy-AdoMet) to putrescine (1,4-diaminobutane) to yield spermidine. The protein is Polyamine aminopropyltransferase 2 of Pseudomonas aeruginosa (strain ATCC 15692 / DSM 22644 / CIP 104116 / JCM 14847 / LMG 12228 / 1C / PRS 101 / PAO1).